A 524-amino-acid chain; its full sequence is Ribonuclease Y (524 aa).

The chain crosses the membrane as a helical span at residues 7–27; the sequence is LGGLLTGIVIAIIASIIASVI. Residues 214 to 299 form the KH domain; sequence TVSVVPLPND…EMVEKARKEV (86 aa). The HD domain maps to 340–433; it reads VLSHSIEVAR…VQAADSISAA (94 aa).

Belongs to the RNase Y family.

It localises to the cell membrane. Functionally, endoribonuclease that initiates mRNA decay. In Acetivibrio thermocellus (strain ATCC 27405 / DSM 1237 / JCM 9322 / NBRC 103400 / NCIMB 10682 / NRRL B-4536 / VPI 7372) (Clostridium thermocellum), this protein is Ribonuclease Y.